A 1201-amino-acid polypeptide reads, in one-letter code: DNA-directed RNA polymerase subunit beta (1201 aa).

The segment at 1165–1201 (DALSKFKQQQDEKAADKAAKADAAKPSETTNAQQDNQ) is disordered. The segment covering 1172-1189 (QQQDEKAADKAAKADAAK) has biased composition (basic and acidic residues). Residues 1191–1201 (SETTNAQQDNQ) show a composition bias toward polar residues.

It belongs to the RNA polymerase beta chain family. As to quaternary structure, the RNAP catalytic core consists of 2 alpha, 1 beta, 1 beta' and 1 omega subunit. When a sigma factor is associated with the core the holoenzyme is formed, which can initiate transcription.

It carries out the reaction RNA(n) + a ribonucleoside 5'-triphosphate = RNA(n+1) + diphosphate. In terms of biological role, DNA-dependent RNA polymerase catalyzes the transcription of DNA into RNA using the four ribonucleoside triphosphates as substrates. This chain is DNA-directed RNA polymerase subunit beta, found in Lactiplantibacillus plantarum (strain ATCC BAA-793 / NCIMB 8826 / WCFS1) (Lactobacillus plantarum).